The following is a 548-amino-acid chain: Calcium-transporting ATPase (548 aa).

The signal sequence occupies residues 1–21; it reads MNFKSTVITAMCCFFSFAVLA. A divalent metal cation contacts are provided by aspartate 37 and threonine 78. The active-site Phosphothreonine intermediate is the threonine 78. Residues asparagine 99 and 160 to 162 each bind substrate; that span reads KDR. The ATP-binding motif lies at 179–187; it reads DGKTGDWIT. Residues aspartate 305, histidine 309, aspartate 352, histidine 353, and histidine 488 each coordinate a divalent metal cation.

Mg(2+) serves as cofactor.

Its subcellular location is the cell inner membrane. The enzyme catalyses Ca(2+)(in) + ATP + H2O = Ca(2+)(out) + ADP + phosphate + H(+). Completely inhibited by vanadate(3-). Also inhibited by lanthanoid atom and phosphate. Not inhibited by N-ethylmaleimide, 1,3-dicyclohexylcarbodiimide, oligomycin, ouabain, valinomycin, nigericin, thapsigargin, cyclopiazonic acid or fluorescein isothiocyanate. Catalyzes the hydrolysis of ATP coupled with the transport of calcium. Has some hydrolysis activity also with dATP, GTP, UTP, ITP and 4-nitrophenyl phosphate as substrate. No activity with ADP, CTP, acetyl dihydrogen phosphate or AMP-PNP as substrate. In Myroides odoratus (Flavobacterium odoratum), this protein is Calcium-transporting ATPase.